A 461-amino-acid polypeptide reads, in one-letter code: Fumarate hydratase class II (461 aa).

Residues Ser99–Thr101, His130–Asp133, Ser140–Asn142, and Thr188 contribute to the substrate site. The Proton donor/acceptor role is filled by His189. The active site involves Ser319. Residues Ser320 and Lys325–Asn327 contribute to the substrate site.

The protein belongs to the class-II fumarase/aspartase family. Fumarase subfamily. As to quaternary structure, homotetramer.

Its subcellular location is the cytoplasm. The enzyme catalyses (S)-malate = fumarate + H2O. It participates in carbohydrate metabolism; tricarboxylic acid cycle; (S)-malate from fumarate: step 1/1. Functionally, involved in the TCA cycle. Catalyzes the stereospecific interconversion of fumarate to L-malate. In Prochlorococcus marinus subsp. pastoris (strain CCMP1986 / NIES-2087 / MED4), this protein is Fumarate hydratase class II.